The following is a 245-amino-acid chain: Probable phosphatase KPN78578_10290 (245 aa).

Zn(2+) contacts are provided by His-7, His-9, His-15, His-40, Glu-73, His-101, His-131, Asp-192, and His-194.

It belongs to the PHP family. In terms of assembly, homotrimer. Zn(2+) is required as a cofactor.

The chain is Probable phosphatase KPN78578_10290 from Klebsiella pneumoniae subsp. pneumoniae (strain ATCC 700721 / MGH 78578).